The sequence spans 351 residues: dTDP-glucose 4,6-dehydratase (351 aa).

NAD(+) contacts are provided by residues Phe-12–Ile-13, Asp-32–Thr-35, Asp-58–Ile-59, Phe-80–Ser-84, and Thr-99. Ser-84 contributes to the substrate binding site. Residue Thr-133 participates in substrate binding. Asp-134 (proton donor) is an active-site residue. Catalysis depends on proton acceptor residues Glu-135 and Tyr-158. Residue Tyr-158–Lys-162 coordinates NAD(+). Asn-187 serves as a coordination point for substrate. Residue Asn-188 participates in NAD(+) binding. Substrate is bound by residues Lys-197–Leu-198, Pro-213–Tyr-215, Arg-222, Asn-257, and Asp-289–His-293.

This sequence belongs to the NAD(P)-dependent epimerase/dehydratase family. dTDP-glucose dehydratase subfamily. As to quaternary structure, homodimer. NAD(+) is required as a cofactor.

The catalysed reaction is dTDP-alpha-D-glucose = dTDP-4-dehydro-6-deoxy-alpha-D-glucose + H2O. It participates in carbohydrate biosynthesis; dTDP-L-rhamnose biosynthesis. It functions in the pathway bacterial outer membrane biogenesis; LPS O-antigen biosynthesis. Catalyzes the dehydration of dTDP-D-glucose to form dTDP-6-deoxy-D-xylo-4-hexulose via a three-step process involving oxidation, dehydration and reduction. This chain is dTDP-glucose 4,6-dehydratase (rfbB), found in Xanthomonas campestris pv. campestris (strain ATCC 33913 / DSM 3586 / NCPPB 528 / LMG 568 / P 25).